The chain runs to 597 residues: Adenine deaminase 2 (597 aa).

This sequence belongs to the metallo-dependent hydrolases superfamily. Adenine deaminase family. Mn(2+) is required as a cofactor.

The enzyme catalyses adenine + H2O + H(+) = hypoxanthine + NH4(+). This is Adenine deaminase 2 from Agrobacterium fabrum (strain C58 / ATCC 33970) (Agrobacterium tumefaciens (strain C58)).